A 192-amino-acid chain; its full sequence is Small ribosomal subunit protein eS7 (192 aa).

It belongs to the eukaryotic ribosomal protein eS7 family.

This chain is Small ribosomal subunit protein eS7 (RPS7), found in Secale cereale (Rye).